A 325-amino-acid polypeptide reads, in one-letter code: D-xylose 1-dehydrogenase (NADP(+)) 2 (325 aa).

Positions 1-22 (MMFGILGTAGIGVKSVIPAVQA) are cleaved as a signal peptide.

The protein belongs to the Gfo/Idh/MocA family. Homotetramer.

The protein localises to the secreted. It carries out the reaction D-xylose + NADP(+) = D-xylono-1,5-lactone + NADPH + H(+). NADP-dependent D-xylose dehydrogenase involved in the degradation of D-xylose, a major component of hemicelluloses such as xylan. Even if it shows D-xylose dehydrogenase activity, it is not essential for D-xylose degradation. The protein is D-xylose 1-dehydrogenase (NADP(+)) 2 of Haloferax volcanii (strain ATCC 29605 / DSM 3757 / JCM 8879 / NBRC 14742 / NCIMB 2012 / VKM B-1768 / DS2) (Halobacterium volcanii).